A 318-amino-acid chain; its full sequence is Taste receptor type 2 member 60 (318 aa).

At 1–7 the chain is on the extracellular side; the sequence is MNGDHMV. The helical transmembrane segment at 8 to 28 threads the bilayer; that stretch reads LGSSVTDQKAIILVIILLLLC. Residues 29–40 lie on the Cytoplasmic side of the membrane; the sequence is LVAIAGNGFITA. The chain crosses the membrane as a helical span at residues 41 to 61; sequence ALGVEWVLRGTLLPCDKLLVS. Over 62–88 the chain is Extracellular; it reads LRASRFCLQWVVMGKTIYVLLYPTAFP. The chain crosses the membrane as a helical span at residues 89-109; sequence YNPVLQFLAFQWDFLNAATLW. The Cytoplasmic portion of the chain corresponds to 110–128; that stretch reads FSSWLSVFYCVKIATFTHP. Residues 129-149 traverse the membrane as a helical segment; it reads VFLWLKHKLSEWVPWMFFSSV. Over 150–183 the chain is Extracellular; that stretch reads GLSSFTTILFFIGNHSIYQNYLRNHLQPWNVTGN. 2 N-linked (GlcNAc...) asparagine glycosylation sites follow: Asn-163 and Asn-179. A helical transmembrane segment spans residues 184-204; sequence SIWSYCEKFYLFPVKMITWTM. Topologically, residues 205-234 are cytoplasmic; sequence PTAVFFICMILLITSLGRHMEKALLTTSGF. Residues 235-255 form a helical membrane-spanning segment; it reads REPSVQAHVKALLALLSLAML. The Extracellular segment spans residues 256-264; it reads FISYFLSLV. The helical transmembrane segment at 265-285 threads the bilayer; sequence LSAAGIFPPLDFKFWVGESVI. The Cytoplasmic segment spans residues 286 to 318; sequence YLCAGVHPIILLFSNRRLRAVLERCRSSRCRTP.

Belongs to the G-protein coupled receptor T2R family.

The protein localises to the membrane. Receptor that may play a role in the perception of bitterness and is gustducin-linked. May play a role in sensing the chemical composition of the gastrointestinal content. The activity of this receptor may stimulate alpha gustducin, mediate PLC-beta-2 activation and lead to the gating of TRPM5. This chain is Taste receptor type 2 member 60 (TAS2R60), found in Macaca mulatta (Rhesus macaque).